The primary structure comprises 160 residues: MPPMLSGLLARLVKLLLGRHGSALHWRAAGAATVLLVIVLLAGSYLAVLAERGAPGAQLITYPRALWWSVETATTVGYGDLYPVTLWGRLVAVVVMVAGITSFGLVTAALATWFVGREQERRGHFVRHSEKAAEEAYTRTTRALHERFDRLERMLDDNRR.

The Cytoplasmic segment spans residues 1–27; the sequence is MPPMLSGLLARLVKLLLGRHGSALHWR. A helical transmembrane segment spans residues 28-50; sequence AAGAATVLLVIVLLAGSYLAVLA. Over 51-61 the chain is Extracellular; the sequence is ERGAPGAQLIT. The segment at residues 62–72 is an intramembrane region (helical; Pore-forming); it reads YPRALWWSVET. An intramembrane region (pore-forming) is located at residues 73–80; the sequence is ATTVGYGD. The short motif at 75–80 is the Selectivity filter element; it reads TVGYGD. The Extracellular portion of the chain corresponds to 81-87; the sequence is LYPVTLW. A helical membrane pass occupies residues 88–111; the sequence is GRLVAVVVMVAGITSFGLVTAALA. Over 112 to 160 the chain is Cytoplasmic; sequence TWFVGREQERRGHFVRHSEKAAEEAYTRTTRALHERFDRLERMLDDNRR.

The protein belongs to the potassium channel family. In terms of assembly, homotetramer.

The protein localises to the cell membrane. In terms of biological role, acts as a pH-gated potassium ion channel; changing the cytosolic pH from 7 to 4 opens the channel. This chain is pH-gated potassium channel KcsA (kcsA), found in Streptomyces coelicolor (strain ATCC BAA-471 / A3(2) / M145).